The chain runs to 675 residues: L-type lectin-domain containing receptor kinase IX.2 (675 aa).

An N-terminal signal peptide occupies residues 1–35 (MLYFIFCQNLSSSSSMSNSILFLSLFLFLPFVVDS). Residues Asn9, Asn39, Asn110, Asn146, Asn179, Asn186, Asn191, and Asn212 are each glycosylated (N-linked (GlcNAc...) asparagine). The segment at 36–269 (LYFNFTSFRQ…EEHRLLSWEL (234 aa)) is legume-lectin like. The Extracellular segment spans residues 36–281 (LYFNFTSFRQ…SLDSDKADSR (246 aa)). Residues 282–302 (IGLVIGISASGFVFLTFMVIT) form a helical membrane-spanning segment. Topologically, residues 303–675 (TVVVWSRKQR…VTFSGIEYGR (373 aa)) are cytoplasmic. The 282-residue stretch at 350–631 (FSSHRKLGEG…KQGIQVMNFE (282 aa)) folds into the Protein kinase domain. ATP-binding positions include 356–364 (LGEGGFGAV) and Lys379. The Proton acceptor role is filled by Asp475.

The protein in the C-terminal section; belongs to the protein kinase superfamily. Ser/Thr protein kinase family. This sequence in the N-terminal section; belongs to the leguminous lectin family. In terms of assembly, interacts with ABCG40.

The protein resides in the cell membrane. It catalyses the reaction L-seryl-[protein] + ATP = O-phospho-L-seryl-[protein] + ADP + H(+). The enzyme catalyses L-threonyl-[protein] + ATP = O-phospho-L-threonyl-[protein] + ADP + H(+). Functionally, promotes hydrogen peroxide H(2)O(2) production and cell death. Involved in resistance response to the pathogenic oomycetes Phytophthora infestans and Phytophthora capsici. The sequence is that of L-type lectin-domain containing receptor kinase IX.2 from Arabidopsis thaliana (Mouse-ear cress).